Reading from the N-terminus, the 308-residue chain is Isoaspartyl peptidase/L-asparaginase (308 aa).

Residue Met-1 is modified to N-acetylmethionine. The Nucleophile role is filled by Thr-168. Substrate is bound by residues 196–199 and 219–222; these read RVGD and TGHG.

The protein belongs to the Ntn-hydrolase family. As to quaternary structure, heterodimer of an alpha and beta chain produced by autocleavage. This heterodimer may then dimerize in turn, giving rise to a heterotetramer. In terms of processing, cleaved into an alpha and beta chain by autocatalysis; this activates the enzyme. The N-terminal residue of the beta subunit is responsible for the nucleophile hydrolase activity.

The protein resides in the cytoplasm. The enzyme catalyses L-asparagine + H2O = L-aspartate + NH4(+). The catalysed reaction is Cleavage of a beta-linked Asp residue from the N-terminus of a polypeptide.. Functionally, has both L-asparaginase and beta-aspartyl peptidase activity. May be involved in the production of L-aspartate, which can act as an excitatory neurotransmitter in some brain regions. Is highly active with L-Asp beta-methyl ester. Besides, has catalytic activity toward beta-aspartyl dipeptides and their methyl esters, including beta-L-Asp-L-Phe, beta-L-Asp-L-Phe methyl ester (aspartame), beta-L-Asp-L-Ala, beta-L-Asp-L-Leu and beta-L-Asp-L-Lys. Does not have aspartylglucosaminidase activity and is inactive toward GlcNAc-L-Asn. Likewise, has no activity toward glutamine. The polypeptide is Isoaspartyl peptidase/L-asparaginase (ASRGL1) (Bos taurus (Bovine)).